The following is a 554-amino-acid chain: 7-epi-sesquithujene synthase (554 aa).

Aspartate 308 and aspartate 312 together coordinate Mg(2+). Substrate-binding residues include aspartate 308, aspartate 312, arginine 449, and asparagine 452. The short motif at 308-312 (DDMFD) is the DDXXD motif element. Mg(2+) contacts are provided by asparagine 452, serine 456, and glutamate 460.

Belongs to the terpene synthase family. In terms of assembly, monomer. It depends on Mg(2+) as a cofactor. Requires Mn(2+) as cofactor. In terms of tissue distribution, highly expressed in the husk. Detected in leaf sheaths and leaves.

The protein localises to the cytoplasm. The catalysed reaction is (2E,6E)-farnesyl diphosphate = 7-epi-sesquithujene + diphosphate. The enzyme catalyses (2E,6E)-farnesyl diphosphate = (1S,5S,6R)-alpha-bergamotene + diphosphate. It carries out the reaction (2E,6E)-farnesyl diphosphate = (E)-beta-farnesene + diphosphate. It catalyses the reaction (2E,6E)-farnesyl diphosphate = (S)-beta-bisabolene + diphosphate. The catalysed reaction is (2Z,6E)-farnesyl diphosphate = (-)-beta-curcumene + diphosphate. The enzyme catalyses (2E,6E)-farnesyl diphosphate = gamma-curcumene + diphosphate. It carries out the reaction (2E,6E)-farnesyl diphosphate = sesquisabinene A + diphosphate. It participates in secondary metabolite biosynthesis; terpenoid biosynthesis. Sesquiterpene synthase involved in the production after herbivore attack of a blend of volatiles that attracts natural enemies of herbivores. Converts farnesyl diphosphate to (S)-beta-bisabolene and 7-epi-sesquithujene, along with a mixture of more than 20 other minor sesquiterpene olefins. Can also act in vitro as a monoterpene synthase, converting geranyl diphosphate to (S)-(-)-limonene, beta-myrcene and 11 other monoterpenes. This is 7-epi-sesquithujene synthase from Zea mays (Maize).